The sequence spans 439 residues: MATVLIVGKPNVGKSTLFNKLVRKKKAIVEDEEGVTRDPVQDTVEWYGKTFKLVDTCGVFDNPQDIISQKMKEVTLNMIREADLVLFVVDGKKGITKEDESLADFLRKSNVDTILVANKTENLREFEREVKPELYGLGFGEPIPVSAEHNVNLDVLVETIIRKLEEKGLDLESKPEITDAIKVAIVGRPNVGKSTLFNAILNKERALVSPIPGTTRDPVDEEVFIDGRKYVFVDTAGLRRKSRVEPRTVEKYSNYRVVDSIEKADVVVIVLDATQGITRQDQRIAGLVERRGRASVVVFNKWDLVEHREKRYDEFTKLFREKFYFVDYSPLIFISADKGWNIDKVIDAINLAYASYTTKVPSSAINSALQKVLAFTNLPRGLKIFFGLQVDIKPPTFLFFVNSIEKIKNPQKVFLRKLIRDYVFPFEGSPIFLKFKRSR.

2 consecutive EngA-type G domains span residues 2–168 and 181–357; these read ATVL…EEKG and IKVA…ASYT. GTP-binding positions include 8-15, 55-59, 118-121, 187-194, 234-238, and 300-303; these read GKPNVGKS, DTCGV, NKTE, GRPNVGKS, DTAGL, and NKWD. A KH-like domain is found at 358–439; that stretch reads TKVPSSAINS…PIFLKFKRSR (82 aa).

This sequence belongs to the TRAFAC class TrmE-Era-EngA-EngB-Septin-like GTPase superfamily. EngA (Der) GTPase family. As to quaternary structure, associates with the 50S ribosomal subunit.

Its function is as follows. GTPase that plays an essential role in the late steps of ribosome biogenesis. This Thermotoga petrophila (strain ATCC BAA-488 / DSM 13995 / JCM 10881 / RKU-1) protein is GTPase Der.